We begin with the raw amino-acid sequence, 605 residues long: Dihydrogeodin oxidase (605 aa).

The signal sequence occupies residues 1–18; it reads MPSLKDWVVAGLVPMTIA. N-linked (GlcNAc...) asparagine glycosylation is found at Asn-27, Asn-107, and Asn-112. Plastocyanin-like domains follow at residues 65 to 183, 189 to 347, and 424 to 567; these read TVTQ…GPSS, DLGP…YDES, and YVDW…KIKP. Residues His-117, His-119, His-161, and His-163 each contribute to the Cu cation site. N-linked (GlcNAc...) asparagine glycosylation is found at Asn-278 and Asn-467. Cu cation is bound by residues His-484, His-487, His-489, His-543, Cys-544, His-545, and His-549.

This sequence belongs to the multicopper oxidase family. Cu cation is required as a cofactor.

It catalyses the reaction 2 dihydrogeodin + O2 + 2 H(+) = 2 (+)-geodin + 2 H2O. Its pathway is secondary metabolite biosynthesis. Its function is as follows. Dihydrogeodin oxidase; part of the gene cluster that mediates the biosynthesis of geodin, an intermediate in the biosynthesis of other natural products. The pathway begins with the synthesis of atrochrysone thioester by the polyketide synthase (PKS) gedC. The atrochrysone carboxyl ACP thioesterase gedB then breaks the thioester bond and releases the atrochrysone carboxylic acid from gedC. The atrochrysone carboxylic acid is then converted to atrochrysone which is further transformed into emodinanthrone. The next step is performed by the emodinanthrone oxygenase gedH that catalyzes the oxidation of emodinanthrone to emodin. Emodin O-methyltransferase encoded probably by gedA then catalyzes methylation of the 8-hydroxy group of emodin to form questin. Ring cleavage of questin by questin oxidase gedK leads to desmethylsulochrin via several intermediates including questin epoxide. Another methylation step probably catalyzed by methyltransferase gedG leads to the formation of sulochrin which is further converted to dihydrogeodin by the sulochrin halogenase gedL. Finally, the dihydrogeodin oxidase gedJ catalyzes the stereospecific phenol oxidative coupling reaction converting dihydrogeodin to geodin. This chain is Dihydrogeodin oxidase, found in Aspergillus terreus (strain NIH 2624 / FGSC A1156).